The primary structure comprises 417 residues: Candidapepsin-4 (417 aa).

Residues 1 to 18 (MFLQNILSVLAFALLIDA) form the signal peptide. The propeptide at 19–75 (APVKRSTGFVTLDFNVKRSLVDPKDPTVEVKRSPLFLDIEPTEIPVDDTGRNDVGKR) is activation peptide. Positions 89-403 (YSADITIGSN…DLDDRKISMA (315 aa)) constitute a Peptidase A1 domain. D107 is a catalytic residue. Residues C122 and C134 are joined by a disulfide bond. N137 is a glycosylation site (N-linked (GlcNAc...) asparagine). Residue D293 is part of the active site. C331 and C369 form a disulfide bridge.

The protein belongs to the peptidase A1 family. In terms of processing, O-glycosylated.

It localises to the secreted. The enzyme catalyses Preferential cleavage at the carboxyl of hydrophobic amino acids, but fails to cleave 15-Leu-|-Tyr-16, 16-Tyr-|-Leu-17 and 24-Phe-|-Phe-25 of insulin B chain. Activates trypsinogen, and degrades keratin.. This chain is Candidapepsin-4 (SAP4), found in Candida albicans (strain WO-1) (Yeast).